The following is a 483-amino-acid chain: Rhamnulokinase (483 aa).

Position 11–15 (11–15) interacts with ATP; that stretch reads ASSGR. Substrate-binding positions include G79 and 234–236; that span reads HDT. Catalysis depends on D235, which acts as the Proton acceptor. T257 contacts ATP. N294 contacts substrate. Q302 is an ATP binding site. C352 and C369 form a disulfide bridge. G401 is a binding site for ATP.

The protein belongs to the rhamnulokinase family. Requires Mg(2+) as cofactor.

It carries out the reaction L-rhamnulose + ATP = L-rhamnulose 1-phosphate + ADP + H(+). Its pathway is carbohydrate degradation; L-rhamnose degradation; glycerone phosphate from L-rhamnose: step 2/3. Involved in the catabolism of L-rhamnose (6-deoxy-L-mannose). Catalyzes the transfer of the gamma-phosphate group from ATP to the 1-hydroxyl group of L-rhamnulose to yield L-rhamnulose 1-phosphate. In Listeria monocytogenes serotype 4b (strain F2365), this protein is Rhamnulokinase.